Here is a 497-residue protein sequence, read N- to C-terminus: Probable zinc metalloprotease TRV_03476 (497 aa).

Positions 1 to 24 (MRFLISSLLSGLALLTSLHAFVLA) are cleaved as a signal peptide. Residues asparagine 100 and asparagine 121 are each glycosylated (N-linked (GlcNAc...) asparagine). Residues histidine 171, aspartate 191, and glutamate 227 each coordinate Zn(2+). Asparagine 242 is a glycosylation site (N-linked (GlcNAc...) asparagine). Position 254 (aspartate 254) interacts with Zn(2+). The 87-residue stretch at 411–497 (MPRNVRVNTN…ERGVAVLPFP (87 aa)) folds into the Fibronectin type-III domain. Residue asparagine 424 is glycosylated (N-linked (GlcNAc...) asparagine).

It belongs to the peptidase M28 family. M28B subfamily. Zn(2+) is required as a cofactor.

The protein localises to the secreted. The chain is Probable zinc metalloprotease TRV_03476 from Trichophyton verrucosum (strain HKI 0517).